The following is a 695-amino-acid chain: MANKREFPLDKTRNIGIMAHIDAGKTTTTERILYYTGKIHKIGETHEGASQMDWMEQEQERGITITSAATTAEWKGNRVNIIDTPGHVDFTIEVERSLRVLDGAITVLDAQSGVEPQTENVWRQATTYGVPRIVFVNKMDKLGANFDYSMTTLEDRLQANAHAVQMPIGAEDEFQGVIDLIEMQADIYDEDELGAKWDTVDVPADYLEEATKRRAELVEAVADVNDDIMDKYLEGEEISKEELKAAIRQATIDLKFFPVFAGSAFKNKGVQMLMDGVVDYLPSPLDVRPYNAKNPEDDSEVELMAGDDKPFAGLAFKIATDPFVGRLTFFRVYTGTLQSGSYILNATKDKRERVGRLLQMHSNHRNEIPEVFSGDIAAAIGLKNTTTGDSLTDVDHPLILESMEFPDPVIQVSVEPESKEDRDKLDLALQKLAEEDPTFKAETNNETGETLISGMGELHLDIMVDRMRREFKVVAKIGEPQVAYRETFTKQASAQGKFVRQSGGKGQYGDVWVEFTPNEEGKGFEFEDAIVGGVVPREYIPSVEQGLKESMANGVLAGYPLIDVKAKLYDGSYHDVDSNESAFKIAASMALKNAAKQAGAEILEPIMKVEVIAPEEYLGDIMGQVTARRGAVEGMEARGNAQIVNAMVPLSEMFGYATTLRSATQGRGTFTMVFDHYSAVPKSIQEEIIKKNGGQ.

The 276-residue stretch at 10-285 (DKTRNIGIMA…GVVDYLPSPL (276 aa)) folds into the tr-type G domain. GTP contacts are provided by residues 19–26 (AHIDAGKT), 83–87 (DTPGH), and 137–140 (NKMD).

It belongs to the TRAFAC class translation factor GTPase superfamily. Classic translation factor GTPase family. EF-G/EF-2 subfamily.

Its subcellular location is the cytoplasm. Catalyzes the GTP-dependent ribosomal translocation step during translation elongation. During this step, the ribosome changes from the pre-translocational (PRE) to the post-translocational (POST) state as the newly formed A-site-bound peptidyl-tRNA and P-site-bound deacylated tRNA move to the P and E sites, respectively. Catalyzes the coordinated movement of the two tRNA molecules, the mRNA and conformational changes in the ribosome. This is Elongation factor G from Latilactobacillus sakei subsp. sakei (strain 23K) (Lactobacillus sakei subsp. sakei).